Consider the following 130-residue polypeptide: Small ribosomal subunit protein uS8 (130 aa).

This sequence belongs to the universal ribosomal protein uS8 family.

It is found in the cytoplasm. The chain is Small ribosomal subunit protein uS8 (RPS15A) from Brassica napus (Rape).